Here is a 253-residue protein sequence, read N- to C-terminus: Indole-3-glycerol phosphate synthase (253 aa).

It belongs to the TrpC family.

It carries out the reaction 1-(2-carboxyphenylamino)-1-deoxy-D-ribulose 5-phosphate + H(+) = (1S,2R)-1-C-(indol-3-yl)glycerol 3-phosphate + CO2 + H2O. Its pathway is amino-acid biosynthesis; L-tryptophan biosynthesis; L-tryptophan from chorismate: step 4/5. The protein is Indole-3-glycerol phosphate synthase of Bacillus cereus (strain AH187).